The sequence spans 892 residues: Exo-beta-D-glucosaminidase (892 aa).

The N-terminal stretch at 1 to 18 (MLANAIAALLLGSGIASA) is a signal peptide. A propeptide spanning residues 19-28 (AGHGSPLTSK) is cleaved from the precursor. Asn-196, Asn-336, and Asn-440 each carry an N-linked (GlcNAc...) asparagine glycan. Asp-464 acts as the Proton donor in catalysis. Glu-539 acts as the Nucleophile in catalysis. N-linked (GlcNAc...) asparagine glycosylation is found at Asn-557, Asn-578, Asn-689, and Asn-825.

The protein belongs to the glycosyl hydrolase 2 family. As to quaternary structure, monomer.

Its subcellular location is the secreted. The protein resides in the extracellular space. It catalyses the reaction Hydrolysis of chitosan or chitosan oligosaccharides to remove successive D-glucosamine residues from the non-reducing termini.. Hydrolyzes chitosan and chitooligosaccharides with retention of anomeric configuration. Has no activity against beta-D-galactoside, beta-D-glucuronide, beta-D-mannoside, chitin, glycol chitosan, cellulose, N,N'-diacetylchitibiose and pNP-GlcNAc. This Hypocrea jecorina (Trichoderma reesei) protein is Exo-beta-D-glucosaminidase.